A 638-amino-acid polypeptide reads, in one-letter code: MEHIQGAWKTLSNGFGFKESVFEGSSCMSPTIVHQFGYQRRASDDGKLSDTSKTSSTMRVYLPNKQRTVVNVRSGMSLHDCLMKSLKVRGLQPECCAVFRLIQDPKGKLRLDWNTDAMSLVGAELQVDFLDHVPLTTHNFVRKTFLKLAFCDICQKFLLNAFRCQTCGYKFHEHCSTKVPTMCVDWSNIRQLLLFPNPNNIEGGSHTLPSLTMRRIGESVRIPVSSQQRYSTPHPFSFSTPSPVSECSLSQRQRSTSTPNVHMVSTTMAVDSRVIEDALRSHSESGSPNNLSPTGWSNAKAPAPTHREKAASSTGQEKNKIRARGQRDSSYYWEIIASEVMLSSRIGSGSFGTVYKGKWHGDVAVKILKVTDPTPEQLQAFRNEVAVLRKTRHVNILLFMGYMTKDNLAIVTQWCEGSSLYYHLHVLDTKFQMFQLIDIARQTAQGMDYLHAKNIIHRDMKSNNIFLHEGLTVKIGDFGLATVKTRWSGSQQVEQLTGSILWMAPEVIRMQDNNPFSFQSDVYSYGIVLYELMTGELPYSHIRDRDQIIFLVGRGGVVPDLSKLYKNCPKAMKRLVADSIKKLRDERPLFPQILSSIELLQHSLPKINRSALEPSLHRAAHTEDISSCALTSTRLPVF.

Position 43 is a phosphoserine (Ser-43). One can recognise an RBD domain in the interval 56–130 (STMRVYLPNK…VGAELQVDFL (75 aa)). The segment at 137 to 183 (THNFVRKTFLKLAFCDICQKFLLNAFRCQTCGYKFHEHCSTKVPTMC) adopts a Phorbol-ester/DAG-type zinc-finger fold. Residues His-138, Cys-151, Cys-154, Cys-164, Cys-167, His-172, Cys-175, and Cys-183 each coordinate Zn(2+). Ser-257 is modified (phosphoserine). Thr-266 carries the post-translational modification Phosphothreonine; by autocatalysis. The tract at residues 279–323 (LRSHSESGSPNNLSPTGWSNAKAPAPTHREKAASSTGQEKNKIRA) is disordered. Polar residues predominate over residues 284–297 (ESGSPNNLSPTGWS). At Ser-329 the chain carries Phosphoserine. The region spanning 340–600 (VMLSSRIGSG…PQILSSIELL (261 aa)) is the Protein kinase domain. ATP-binding positions include 346–354 (IGSGSFGTV) and Lys-366. Asp-459 acts as the Proton acceptor in catalysis. Ser-490 is modified (phosphoserine).

This sequence belongs to the protein kinase superfamily. TKL Ser/Thr protein kinase family. RAF subfamily. Zn(2+) is required as a cofactor. In terms of processing, phosphorylation at Ser-257 inactivates kinase activity. Dephosphorylation of Ser-257 by a complex containing protein phosphatase 1 relieves inactivation, leading to stimulate RAF1 activity.

It localises to the cytoplasm. The protein resides in the cell membrane. The catalysed reaction is L-seryl-[protein] + ATP = O-phospho-L-seryl-[protein] + ADP + H(+). It catalyses the reaction L-threonyl-[protein] + ATP = O-phospho-L-threonyl-[protein] + ADP + H(+). Its function is as follows. Serine/threonine-protein kinase that acts as a regulatory link between the membrane-associated Ras GTPases and the MAPK/ERK cascade, and this critical regulatory link functions as a switch determining cell fate decisions. RAF1 activation initiates a mitogen-activated protein kinase (MAPK) cascade that comprises a sequential phosphorylation of the dual-specific MAPK kinases (MAP2K1/MEK1 and MAP2K2/MEK2) and the extracellular signal-regulated kinases (MAPK3/ERK1 and MAPK1/ERK2). The protein is RAF proto-oncogene serine/threonine-protein kinase (raf1) of Xenopus laevis (African clawed frog).